Reading from the N-terminus, the 103-residue chain is Putative membrane protein insertion efficiency factor (103 aa).

It belongs to the UPF0161 family.

The protein localises to the cell inner membrane. Could be involved in insertion of integral membrane proteins into the membrane. The protein is Putative membrane protein insertion efficiency factor of Chlamydia pneumoniae (Chlamydophila pneumoniae).